A 222-amino-acid chain; its full sequence is UPF0173 metal-dependent hydrolase Nther_2337 (222 aa).

It belongs to the UPF0173 family.

This is UPF0173 metal-dependent hydrolase Nther_2337 from Natranaerobius thermophilus (strain ATCC BAA-1301 / DSM 18059 / JW/NM-WN-LF).